The primary structure comprises 578 residues: Isocitrate dehydrogenase kinase/phosphatase (578 aa).

ATP-binding positions include 315 to 321 (APGIRGM) and Lys336. Asp371 is a catalytic residue.

Belongs to the AceK family.

The protein resides in the cytoplasm. The enzyme catalyses L-seryl-[isocitrate dehydrogenase] + ATP = O-phospho-L-seryl-[isocitrate dehydrogenase] + ADP + H(+). In terms of biological role, bifunctional enzyme which can phosphorylate or dephosphorylate isocitrate dehydrogenase (IDH) on a specific serine residue. This is a regulatory mechanism which enables bacteria to bypass the Krebs cycle via the glyoxylate shunt in response to the source of carbon. When bacteria are grown on glucose, IDH is fully active and unphosphorylated, but when grown on acetate or ethanol, the activity of IDH declines drastically concomitant with its phosphorylation. This is Isocitrate dehydrogenase kinase/phosphatase from Shigella dysenteriae serotype 1 (strain Sd197).